The primary structure comprises 325 residues: Aldo-keto reductase family 1 member A1 (325 aa).

Residue Thr-2 is modified to N-acetylthreonine. Ser-4 is modified (phosphoserine). Residues 11–20 (GQKMPLIGLG), Thr-21, and Trp-22 contribute to the NADP(+) site. The residue at position 38 (Ser-38) is a Phosphoserine. Residue Asp-45 participates in NADP(+) binding. The active-site Proton donor is Tyr-50. Lys-127 carries the post-translational modification N6-acetyllysine; alternate. Lys-127 is subject to N6-succinyllysine; alternate. Lys-145 is modified (N6-succinyllysine). NADP(+) contacts are provided by Ser-162, Asn-163, Ser-211, Leu-213, Ser-215, Ser-216, Lys-263, Ser-264, Ile-265, Arg-269, Gln-272, and Asn-273. Ser-211 bears the Phosphoserine mark.

Belongs to the aldo/keto reductase family. Monomer. In terms of tissue distribution, widely expressed.

The protein localises to the cytoplasm. The protein resides in the cytosol. It is found in the apical cell membrane. It catalyses the reaction a primary alcohol + NADP(+) = an aldehyde + NADPH + H(+). The catalysed reaction is L-gulonate + NADP(+) = aldehydo-D-glucuronate + NADPH + H(+). It carries out the reaction L-gulono-1,4-lactone + NADP(+) = D-glucurono-3,6-lactone + NADPH + H(+). The enzyme catalyses allyl alcohol + NADP(+) = acrolein + NADPH + H(+). It catalyses the reaction glycerol + NADP(+) = D-glyceraldehyde + NADPH + H(+). The catalysed reaction is glycerol + NADP(+) = L-glyceraldehyde + NADPH + H(+). It carries out the reaction hydroxyacetone + NADP(+) = methylglyoxal + NADPH + H(+). The enzyme catalyses 3-deoxyfructose + NADP(+) = 3-deoxyglucosone + NADPH + H(+). It catalyses the reaction (R)-mevalonate + NADP(+) = (R)-mevaldate + NADPH + H(+). The catalysed reaction is pyridine 3-methanol + NADP(+) = pyridine-3-carbaldehyde + NADPH + H(+). It carries out the reaction S-nitroso-CoA + NADPH + H(+) = sulfinamide-CoA + NADP(+). The enzyme catalyses S-nitrosoglutathione + NADPH + H(+) = S-(hydroxysulfenamide)glutathione + NADP(+). Functionally, catalyzes the NADPH-dependent reduction of a wide variety of carbonyl-containing compounds to their corresponding alcohols. Displays enzymatic activity towards endogenous metabolites such as aromatic and aliphatic aldehydes, ketones, monosaccharides and bile acids, with a preference for negatively charged substrates, such as glucuronate and succinic semialdehyde. Plays an important role in ascorbic acid biosynthesis by catalyzing the reduction of D-glucuronic acid and D-glucurono-gamma-lactone. Functions as a detoxifiying enzyme by reducing a range of toxic aldehydes. Reduces methylglyoxal and 3-deoxyglucosone, which are present at elevated levels under hyperglycemic conditions and are cytotoxic. Involved in the detoxification of lipid-derived aldehydes like acrolein. Plays a role in the activation of procarcinogens, such as polycyclic aromatic hydrocarbon trans-dihydrodiols, and in the metabolism of various xenobiotics and drugs. Also acts as an inhibitor of protein S-nitrosylation by mediating degradation of S-nitroso-coenzyme A (S-nitroso-CoA), a cofactor required to S-nitrosylate proteins. S-nitroso-CoA reductase activity is involved in reprogramming intermediary metabolism in renal proximal tubules, notably by inhibiting protein S-nitrosylation of isoform 2 of PKM (PKM2). Also acts as a S-nitroso-glutathione reductase by catalyzing the NADPH-dependent reduction of S-nitrosoglutathione. Displays no reductase activity towards retinoids. This is Aldo-keto reductase family 1 member A1 from Mus musculus (Mouse).